The chain runs to 349 residues: MEIYTSDNYSEEVGSGDYDSNKEPCFRDENENFNRIFLPTIYFIIFLTGIVGNGLVILVMGYQKKLRSMTDKYRLHLSVADLLFVITLPFWAVDAMADWYFGKFLCKAVHIIYTVNLYSSVLILAFISLDRYLAIVHATNSQRPRKLLAEKAVYVGVWIPALLLTIPDIIFADVSQGDGRYICDRLYPDSLWMVVFQFQHIMVGLILPGIVILSCYCIIISKLSHSKGHQKRKALKTTVILILAFFACWLPYYVGISIDSFILLEVIKQGCEFESVVHKWISITEALAFFHCCLNPILYAFLGAKFKSSAQHALNSMSRGSSLKILSKGKRGGHSSVSTESESSSFHSS.

Residues 1–18 form an important for chemokine binding and signaling region; that stretch reads MEIYTSDNYSEEVGSGDY. The segment at 1-23 is disordered; it reads MEIYTSDNYSEEVGSGDYDSNKE. Residues 1 to 35 are Extracellular-facing; sequence MEIYTSDNYSEEVGSGDYDSNKEPCFRDENENFNR. Asn8 carries N-linked (GlcNAc...) asparagine glycosylation. Tyr9 is modified (sulfotyrosine). The O-linked (Xyl...) (chondroitin sulfate) serine glycan is linked to Ser15. Tyr18 is modified (sulfotyrosine). 2 disulfides stabilise this stretch: Cys25-Cys271 and Cys106-Cys183. Residues 36–60 form a helical membrane-spanning segment; it reads IFLPTIYFIIFLTGIVGNGLVILVM. The Cytoplasmic portion of the chain corresponds to 61 to 74; that stretch reads GYQKKLRSMTDKYR. A helical membrane pass occupies residues 75–96; that stretch reads LHLSVADLLFVITLPFWAVDAM. A chemokine binding region spans residues 91–94; that stretch reads WAVD. The Extracellular portion of the chain corresponds to 97–107; it reads ADWYFGKFLCK. Residues 108–127 traverse the membrane as a helical segment; it reads AVHIIYTVNLYSSVLILAFI. Residues 110-114 are chemokine binding; it reads HIIYT. Residues 128–151 lie on the Cytoplasmic side of the membrane; sequence SLDRYLAIVHATNSQRPRKLLAEK. An Important for signaling motif is present at residues 130-132; sequence DRY. Positions 132 to 144 are involved in dimerization; when bound to chemokine; sequence YLAIVHATNSQRP. Residues 152 to 171 form a helical membrane-spanning segment; the sequence is AVYVGVWIPALLLTIPDIIF. The Extracellular segment spans residues 172–192; the sequence is ADVSQGDGRYICDRLYPDSLW. A chemokine binding, important for signaling region spans residues 183–187; that stretch reads CDRLY. The tract at residues 188–207 is involved in dimerization; that stretch reads PDSLWMVVFQFQHIMVGLIL. The helical transmembrane segment at 193 to 213 threads the bilayer; that stretch reads MVVFQFQHIMVGLILPGIVIL. Over 214–238 the chain is Cytoplasmic; it reads SCYCIIISKLSHSKGHQKRKALKTT. Residues 239-258 traverse the membrane as a helical segment; the sequence is VILILAFFACWLPYYVGISI. The Extracellular portion of the chain corresponds to 259 to 279; it reads DSFILLEVIKQGCEFESVVHK. The tract at residues 263–265 is involved in dimerization; sequence LLE. Residues 280-299 traverse the membrane as a helical segment; it reads WISITEALAFFHCCLNPILY. Over 300-349 the chain is Cytoplasmic; the sequence is AFLGAKFKSSAQHALNSMSRGSSLKILSKGKRGGHSSVSTESESSSFHSS. Residues Ser316 and Ser318 each carry the phosphoserine modification. Phosphoserine; by PKC and GRK6 is present on residues Ser321 and Ser322. The interval 325–349 is disordered; sequence ILSKGKRGGHSSVSTESESSSFHSS. Position 327 is a phosphoserine; by GRK6 (Ser327). Residue Lys328 forms a Glycyl lysine isopeptide (Lys-Gly) (interchain with G-Cter in ubiquitin) linkage. Residues 334–349 are compositionally biased toward low complexity; the sequence is HSSVSTESESSSFHSS. At Ser336 the chain carries Phosphoserine; by GRK6. Residues Ser345 and Ser348 each carry the phosphoserine modification.

It belongs to the G-protein coupled receptor 1 family. As to quaternary structure, monomer. Can form homodimers. Interacts with CD164. Interacts with ARRB2; the interaction is dependent on the C-terminal phosphorylation of CXCR4 and allows activation of MAPK1 and MAPK3. Interacts with ARR3; the interaction is dependent on the C-terminal phosphorylation of CXCR4 and modulates calcium mobilization. Interacts with RNF113A; the interaction, enhanced by CXCL12, promotes CXCR4 ubiquitination and subsequent degradation. Interacts (via the cytoplasmic C-terminal) with ITCH (via the WW domains I and II); the interaction, enhanced by CXCL12, promotes CXCR4 ubiquitination and leads to its degradation. Interacts with extracellular ubiquitin. Interacts with DBN1; this interaction is enhanced by antigenic stimulation. Following LPS binding, may form a complex with GDF5, HSP90AA1 and HSPA8. In terms of processing, phosphorylated on agonist stimulation. Rapidly phosphorylated on serine and threonine residues in the C-terminal. Phosphorylation at Ser-321 and Ser-322 leads to recruitment of ITCH, ubiquitination and protein degradation. Ubiquitinated after ligand binding, leading to its degradation. Ubiquitinated by ITCH at the cell membrane on agonist stimulation. The ubiquitin-dependent mechanism, endosomal sorting complex required for transport (ESCRT), then targets CXCR4 for lysosomal degradation. This process is dependent also on prior Ser-/Thr-phosphorylation in the C-terminal of CXCR4. Also binding of ARRB1 to STAM negatively regulates CXCR4 sorting to lysosomes though modulating ubiquitination of SFR5S. Post-translationally, sulfation is required for efficient binding of CXCL12/SDF-1alpha and promotes its dimerization. In terms of processing, O- and N-glycosylated. N-glycosylation can mask coreceptor function. The O-glycosylation chondroitin sulfate attachment does not affect interaction with CXCL12/SDF-1alpha nor its coreceptor activity.

It is found in the cell membrane. It localises to the cell junction. The protein resides in the early endosome. The protein localises to the late endosome. Its subcellular location is the lysosome. Functionally, receptor for the C-X-C chemokine CXCL12/SDF-1 that transduces a signal by increasing intracellular calcium ion levels and enhancing MAPK1/MAPK3 activation. Involved in the AKT signaling cascade. Plays a role in regulation of cell migration, e.g. during wound healing. Acts as a receptor for extracellular ubiquitin; leading to enhanced intracellular calcium ions and reduced cellular cAMP levels. Binds bacterial lipopolysaccharide (LPS) et mediates LPS-induced inflammatory response, including TNF secretion by monocytes. Involved in hematopoiesis and in cardiac ventricular septum formation. Also plays an essential role in vascularization of the gastrointestinal tract, probably by regulating vascular branching and/or remodeling processes in endothelial cells. Involved in cerebellar development. In the CNS, could mediate hippocampal-neuron survival. This chain is C-X-C chemokine receptor type 4 (Cxcr4), found in Rattus norvegicus (Rat).